Reading from the N-terminus, the 457-residue chain is MTKKVYVKTFGCQMNEYDSDKMVDVLNAAEGLEKTDSPEDADIILFNTCSVREKAQEKVFSDLGRVRELKEAKPDLLIGVGGCVASQEGASIVARAPYVDLVFGPQTLHRLPQMIDARRESGRAQVDITFPEIEKFDHLPPARVEGPSAFVSIMEGCSKYCSYCVVPYTRGDEVSRPLDDVLTEIAGLADQGVREVTLLGQNVNAYRGALTAGAHEIADFATLIEYVADIPGIERIRYTTSHPKEFTQRLLDVYAKVPKLVDHLHLPVQHGSDRILMAMKRGYTVLEYKSLIRKLRAIRPNLSLSTDIIVGFPGETEADFDKTMALVHEMSYDTSFSFIYSPRPGTPAANLADDTPREVKLERLQHLQATIEENVARISQSMLGKVERILVEGPSRKDPNELAGRTENNRVVNFPAPLTAHARLIGQMIDVKINHAYPHSLRGELVLAHDDASAATH.

Residues 3-120 (KKVYVKTFGC…LPQMIDARRE (118 aa)) enclose the MTTase N-terminal domain. [4Fe-4S] cluster contacts are provided by C12, C49, C83, C157, C161, and C164. The Radical SAM core domain occupies 143 to 377 (RVEGPSAFVS…QATIEENVAR (235 aa)). Residues 380-447 (QSMLGKVERI…PHSLRGELVL (68 aa)) enclose the TRAM domain.

The protein belongs to the methylthiotransferase family. MiaB subfamily. Monomer. Requires [4Fe-4S] cluster as cofactor.

The protein localises to the cytoplasm. The enzyme catalyses N(6)-dimethylallyladenosine(37) in tRNA + (sulfur carrier)-SH + AH2 + 2 S-adenosyl-L-methionine = 2-methylsulfanyl-N(6)-dimethylallyladenosine(37) in tRNA + (sulfur carrier)-H + 5'-deoxyadenosine + L-methionine + A + S-adenosyl-L-homocysteine + 2 H(+). In terms of biological role, catalyzes the methylthiolation of N6-(dimethylallyl)adenosine (i(6)A), leading to the formation of 2-methylthio-N6-(dimethylallyl)adenosine (ms(2)i(6)A) at position 37 in tRNAs that read codons beginning with uridine. In Burkholderia thailandensis (strain ATCC 700388 / DSM 13276 / CCUG 48851 / CIP 106301 / E264), this protein is tRNA-2-methylthio-N(6)-dimethylallyladenosine synthase.